Consider the following 338-residue polypeptide: MSIIMTGGGTGGHLAIIKAVKEQLKGEELIYIGSTTGQDRQWFENDEDFTETYFFDTRGVVNQRGFGKLKSLWMMLQAMMKARKLLKKYDAKVVFSVGGFSSAATAFAAKSASVPLVIHEQNAALGSLNKLLRPYAAAFISSYLEESPIKAYPIKEVFFDNVRVRKNVETIIFLGGSQGAKAINKLALEIAPKLKERGIRIIHQAGEKNIDEVRKDYEDIGIEAEVFGFTTKLADYMKEADLAIARAGASTLWELSATALPTLFIPYPYAVSDHQYYNAQFLVEKDLAWIMREGEIDTQKVLALLGEDLETKSRGLMEIVEKDGSKQIADLLKNYAKS.

Residues 10–12 (TGG), asparagine 122, serine 177, and glutamine 275 each bind UDP-N-acetyl-alpha-D-glucosamine.

Belongs to the glycosyltransferase 28 family. MurG subfamily.

Its subcellular location is the cell inner membrane. The enzyme catalyses di-trans,octa-cis-undecaprenyl diphospho-N-acetyl-alpha-D-muramoyl-L-alanyl-D-glutamyl-meso-2,6-diaminopimeloyl-D-alanyl-D-alanine + UDP-N-acetyl-alpha-D-glucosamine = di-trans,octa-cis-undecaprenyl diphospho-[N-acetyl-alpha-D-glucosaminyl-(1-&gt;4)]-N-acetyl-alpha-D-muramoyl-L-alanyl-D-glutamyl-meso-2,6-diaminopimeloyl-D-alanyl-D-alanine + UDP + H(+). It participates in cell wall biogenesis; peptidoglycan biosynthesis. In terms of biological role, cell wall formation. Catalyzes the transfer of a GlcNAc subunit on undecaprenyl-pyrophosphoryl-MurNAc-pentapeptide (lipid intermediate I) to form undecaprenyl-pyrophosphoryl-MurNAc-(pentapeptide)GlcNAc (lipid intermediate II). This Sulfurovum sp. (strain NBC37-1) protein is UDP-N-acetylglucosamine--N-acetylmuramyl-(pentapeptide) pyrophosphoryl-undecaprenol N-acetylglucosamine transferase.